An 88-amino-acid chain; its full sequence is EMBRYO SURROUNDING FACTOR 1-like protein 3 (88 aa).

Positions 1 to 22 (MKLSQIALICIVIASLFAMHEC) are cleaved as a signal peptide. 3 disulfides stabilise this stretch: Cys-41–Cys-56, Cys-54–Cys-80, and Cys-57–Cys-67.

Belongs to the MEG family. Expressed in stems, leaves and flowers.

The chain is EMBRYO SURROUNDING FACTOR 1-like protein 3 (ESFL3) from Arabidopsis thaliana (Mouse-ear cress).